A 426-amino-acid chain; its full sequence is Serine--tRNA ligase (426 aa).

233–235 (TAE) is an L-serine binding site. 264–266 (RSE) lines the ATP pocket. Position 287 (Glu287) interacts with L-serine. 351–354 (EISS) serves as a coordination point for ATP. Ser387 contacts L-serine.

This sequence belongs to the class-II aminoacyl-tRNA synthetase family. Type-1 seryl-tRNA synthetase subfamily. In terms of assembly, homodimer. The tRNA molecule binds across the dimer.

It localises to the cytoplasm. It catalyses the reaction tRNA(Ser) + L-serine + ATP = L-seryl-tRNA(Ser) + AMP + diphosphate + H(+). It carries out the reaction tRNA(Sec) + L-serine + ATP = L-seryl-tRNA(Sec) + AMP + diphosphate + H(+). It functions in the pathway aminoacyl-tRNA biosynthesis; selenocysteinyl-tRNA(Sec) biosynthesis; L-seryl-tRNA(Sec) from L-serine and tRNA(Sec): step 1/1. Catalyzes the attachment of serine to tRNA(Ser). Is also able to aminoacylate tRNA(Sec) with serine, to form the misacylated tRNA L-seryl-tRNA(Sec), which will be further converted into selenocysteinyl-tRNA(Sec). The polypeptide is Serine--tRNA ligase (Clostridium botulinum (strain Loch Maree / Type A3)).